The sequence spans 531 residues: Transcription factor LG2 (531 aa).

Disordered stretches follow at residues 115-154 (RHQQ…ASSA) and 195-220 (LHGG…KLVD). A compositionally biased stretch (polar residues) spans 116–154 (HQQQLHSGNSQSVGSTGTDSSSAQNTMSQMELVSPASSA). The region spanning 220–264 (DAKTERRLAQNREAARKSRLRKKAYVQQLETSRIRLQQVEHELQR) is the bZIP domain. Residues 222 to 242 (KTERRLAQNREAARKSRLRKK) are basic motif. Residues 224–231 (ERRLAQNR) carry the Nuclear localization signal motif. The tract at residues 248-262 (LETSRIRLQQVEHEL) is leucine-zipper. Positions 285-499 (AAMFDMEYAR…RALSNLWASR (215 aa)) constitute a DOG1 domain.

It belongs to the bZIP family. As to quaternary structure, binds DNA as a dimer. In terms of tissue distribution, expression in meristem/developing ligule regions.

It is found in the nucleus. Functionally, required for the formation of the blade-sheath boundary in leaves. Promotes flowering. The protein is Transcription factor LG2 of Zea mays (Maize).